The primary structure comprises 255 residues: tRNA (guanine-N(1)-)-methyltransferase (255 aa).

S-adenosyl-L-methionine-binding positions include G113 and 133–138 (IGDYVL).

The protein belongs to the RNA methyltransferase TrmD family. As to quaternary structure, homodimer.

It localises to the cytoplasm. It carries out the reaction guanosine(37) in tRNA + S-adenosyl-L-methionine = N(1)-methylguanosine(37) in tRNA + S-adenosyl-L-homocysteine + H(+). Specifically methylates guanosine-37 in various tRNAs. The sequence is that of tRNA (guanine-N(1)-)-methyltransferase from Escherichia coli O81 (strain ED1a).